Reading from the N-terminus, the 518-residue chain is UPF0288 protein Mbar_A0706 (518 aa).

This sequence belongs to the UPF0288 family.

The protein is UPF0288 protein Mbar_A0706 of Methanosarcina barkeri (strain Fusaro / DSM 804).